Here is a 430-residue protein sequence, read N- to C-terminus: Adenylosuccinate synthetase (430 aa).

Residues 12–18 and 40–42 contribute to the GTP site; these read GDEGKGK and GHT. The active-site Proton acceptor is the Asp-13. Mg(2+) contacts are provided by Asp-13 and Gly-40. IMP is bound by residues 13 to 16, 38 to 41, Thr-128, Arg-142, Gln-223, Thr-238, and Arg-302; these read DEGK and NAGH. The active-site Proton donor is His-41. 298–304 is a substrate binding site; sequence TTTGRPR. GTP-binding positions include Arg-304, 330 to 332, and 412 to 414; these read LLD and SVG.

This sequence belongs to the adenylosuccinate synthetase family. Homodimer. Requires Mg(2+) as cofactor.

The protein localises to the cytoplasm. It catalyses the reaction IMP + L-aspartate + GTP = N(6)-(1,2-dicarboxyethyl)-AMP + GDP + phosphate + 2 H(+). It functions in the pathway purine metabolism; AMP biosynthesis via de novo pathway; AMP from IMP: step 1/2. Its function is as follows. Plays an important role in the de novo pathway of purine nucleotide biosynthesis. Catalyzes the first committed step in the biosynthesis of AMP from IMP. The chain is Adenylosuccinate synthetase from Listeria monocytogenes serovar 1/2a (strain ATCC BAA-679 / EGD-e).